Here is a 154-residue protein sequence, read N- to C-terminus: Transcriptional repressor NrdR (154 aa).

A zinc finger spans residues 3–34 (CPHCHKNGSRVVDSRPSEDGSFIRRRRECIHC). The ATP-cone domain occupies 49-139 (LLVIKKDGTR…VYRQFKDVDA (91 aa)).

The protein belongs to the NrdR family. Zn(2+) serves as cofactor.

Negatively regulates transcription of bacterial ribonucleotide reductase nrd genes and operons by binding to NrdR-boxes. The sequence is that of Transcriptional repressor NrdR from Limosilactobacillus reuteri (strain DSM 20016) (Lactobacillus reuteri).